We begin with the raw amino-acid sequence, 302 residues long: Recombination-associated protein RdgC (302 aa).

It belongs to the RdgC family.

It is found in the cytoplasm. The protein localises to the nucleoid. Functionally, may be involved in recombination. This Actinobacillus succinogenes (strain ATCC 55618 / DSM 22257 / CCUG 43843 / 130Z) protein is Recombination-associated protein RdgC.